We begin with the raw amino-acid sequence, 1195 residues long: ATP-dependent DNA helicase Hel308 (1195 aa).

ATP-binding positions include Gln-20 and 39 to 46 (IPTASGKT). One can recognise a Helicase ATP-binding domain in the interval 26 to 196 (RGLLDKNKNF…WLNAELIVDD (171 aa)). The short motif at 143-146 (DEIH) is the DEAH box element. The region spanning 451–584 (FIGYFIGDGY…LQFVLLRFGI (134 aa)) is the DOD-type homing endonuclease domain.

It belongs to the helicase family. Hel308 subfamily. As to quaternary structure, monomer. This protein undergoes a protein self splicing that involves a post-translational excision of the intervening region (intein) followed by peptide ligation.

It catalyses the reaction Couples ATP hydrolysis with the unwinding of duplex DNA by translocating in the 3'-5' direction.. The catalysed reaction is ATP + H2O = ADP + phosphate + H(+). DNA-dependent ATPase and 3'-5' DNA helicase that may be involved in repair of stalled replication forks. The protein is ATP-dependent DNA helicase Hel308 of Methanocaldococcus jannaschii (strain ATCC 43067 / DSM 2661 / JAL-1 / JCM 10045 / NBRC 100440) (Methanococcus jannaschii).